Here is an 873-residue protein sequence, read N- to C-terminus: Disks large homolog 1 (873 aa).

The region spanning 4–64 (RQKDAQRALQ…YYEVSLQDTE (61 aa)) is the L27 domain. A disordered region spans residues 62-135 (DTEDKPIEDS…SPHIPGDARP (74 aa)). Basic and acidic residues predominate over residues 63 to 77 (TEDKPIEDSSLKSRE). Residues 85 to 96 (WNLSVPPSTTGP) are compositionally biased toward polar residues. 2 PDZ domains span residues 230–317 (EITL…RRRK) and 325–412 (DVKL…AKPT). The span at 441–456 (SYLSQPLTPATPSRYS) shows a compositional bias: polar residues. The disordered stretch occupies residues 441 to 464 (SYLSQPLTPATPSRYSPVSKGMLG). A PDZ 3 domain is found at 474–555 (KIVLHRGTTG…TVTIIAQYRP (82 aa)). The segment at 636–662 (NKDSGEQDTSDVDQHVTSNASDSESSF) is disordered. Polar residues predominate over residues 650–662 (HVTSNASDSESSF). One can recognise a Guanylate kinase-like domain in the interval 683-858 (SRPVIILGPM…IYNQVKQIIE (176 aa)).

The protein belongs to the MAGUK family.

Its subcellular location is the cell membrane. The protein resides in the endoplasmic reticulum membrane. The protein localises to the cell junction. It is found in the apical cell membrane. Functionally, essential multidomain scaffolding protein required for normal development. Recruits channels, receptors and signaling molecules to discrete plasma membrane domains in polarized cells. Promotes epithelial cell layer barrier function via maintaining cell-cell adhesion. May play a role in adherens junction assembly, signal transduction and cell proliferation. May play a role in synapse assembly and function. The polypeptide is Disks large homolog 1 (dlg1) (Danio rerio (Zebrafish)).